The primary structure comprises 446 residues: tRNA modification GTPase MnmE (446 aa).

The (6S)-5-formyl-5,6,7,8-tetrahydrofolate site is built by arginine 23, glutamate 81, and lysine 120. The 155-residue stretch at 216-370 (GFKVAIIGKP…LIKELELILD (155 aa)) folds into the TrmE-type G domain. A K(+)-binding site is contributed by asparagine 226. Residues 226–231 (NVGKSS), 245–251 (SDIAGTT), and 270–273 (DTAG) each bind GTP. Residue serine 230 coordinates Mg(2+). The K(+) site is built by serine 245, isoleucine 247, and threonine 250. Threonine 251 contacts Mg(2+). Lysine 446 is a (6S)-5-formyl-5,6,7,8-tetrahydrofolate binding site.

Belongs to the TRAFAC class TrmE-Era-EngA-EngB-Septin-like GTPase superfamily. TrmE GTPase family. As to quaternary structure, homodimer. Heterotetramer of two MnmE and two MnmG subunits. K(+) serves as cofactor.

Its subcellular location is the cytoplasm. Functionally, exhibits a very high intrinsic GTPase hydrolysis rate. Involved in the addition of a carboxymethylaminomethyl (cmnm) group at the wobble position (U34) of certain tRNAs, forming tRNA-cmnm(5)s(2)U34. This chain is tRNA modification GTPase MnmE, found in Aliarcobacter butzleri (strain RM4018) (Arcobacter butzleri).